A 129-amino-acid chain; its full sequence is HTH-type transcriptional regulator DdrOP3 (129 aa).

Residues 7 to 61 (LRELRQERGLRLKDIAGAAQISVPYLSDLERGRTNPSLETLQSLASTYGITVHDL) enclose the HTH cro/C1-type domain. The segment at residues 18–37 (LKDIAGAAQISVPYLSDLER) is a DNA-binding region (H-T-H motif).

Post-translationally, cleaved between Leu-106 and Arg-107 by the IrrE metalloprotease after exposure to radiation. Cleavage inactivates DdrOP3, leading to derepression of the target genes.

Functionally, repressor specific for genes preceded by a radiation/desiccation response motif (RDRM) site, which is present upstream of several radiation-induced genes. This chain is HTH-type transcriptional regulator DdrOP3, found in Deinococcus deserti (strain DSM 17065 / CIP 109153 / LMG 22923 / VCD115).